A 353-amino-acid polypeptide reads, in one-letter code: Protein Wnt-11b (353 aa).

The signal sequence occupies residues 1 to 22 (MAPTRHWVTPLLLLCCSGICGA). 3 N-linked (GlcNAc...) asparagine glycosylation sites follow: N31, N38, and N88. 5 cysteine pairs are disulfide-bonded: C78-C89, C128-C136, C138-C155, C208-C222, and C210-C217. S214 is lipidated: O-palmitoleoyl serine; by PORCN. 2 positions are modified to sulfotyrosine: Y274 and Y281. 6 cysteine pairs are disulfide-bonded: C282–C313, C298–C308, C312–C352, C328–C343, C330–C340, and C335–C336. An N-linked (GlcNAc...) asparagine glycan is attached at N299.

This sequence belongs to the Wnt family. Homodimer. Secreted homodimers form a complex with wnt5a homodimers; tyrosine sulfation of both wnt11 and wnt5a by tpst1 is required for this interaction. Interacts with the transmembrane receptor fzd7/fz7. Interacts with lrp6 and ryk. Interacts with tdgf1/frl1. Interacts weakly with frzb1 and strongly with frzb2/crescent. Interaction with frzb2/crescent antagonizes wnt11 function in the neuroectoderm, but enhances it in mesodermal tissue. Post-translationally, glycosylation is required for protein secretion. Palmitoleoylation is required for efficient binding to frizzled receptors. Depalmitoleoylation leads to Wnt signaling pathway inhibition. Transcripts are expressed ubiquitously in early oocytes but become vegetally localized during mid-oogenesis then enriched on the dorsal side by the 8 to 16 cell stage. The protein becomes asymmetrically concentrated on the dorsal side by the 64-cell stage. During gastrulation, expressed in the lateral and ventral marginal zone, and during tadpole stages in the somites and first branchial arch. Weakly expressed in the pronephros from at least stage 12.5, with kidney expression increasing until stage 35. Expressed in the prospective posterior gut between stages 13 and 20, and in the deep foregut endoderm. Prior to neural crest cell migration, expressed in a domain flanking the neural crest on the lateral or epidermal side (the opposite side to wnt11/wnt11-r).

It localises to the secreted. Its subcellular location is the extracellular space. The protein localises to the extracellular matrix. Its function is as follows. Ligand for the frizzled7 transmembrane receptor. Primarily acts via non-canonical Wnt pathways mediated by either Ca(2+) and PKC, or by JNK and dvl2/dsh. Depending on the cellular context, can also signal via the canonical Wnt pathway mediated by beta-catenin and dvl2/dsh. May also inhibit canonical Wnt signaling. Maternally initiates dorsal/ventral axis formation by a canonical route, which signals via lrp6. In a complex with wnt5a, activates the canonical and non-canonical processes involved in axis formation. In the non-canonical pathway, acts through fzd7/fz7 to induce phosphorylation of dvl2/dsh. Signals through a non-canonical Wnt pathway to regulate convergent extension movements during gastrulation. Interactions with the secreted Wnt antagonist sfrp5 to coordinate foregut development, acting via a non-canonical Wnt pathway whereby sfrp5 restricts wnt11b activity to prevent inappropriate foregut formation. Mediates cardiogenesis via non-canonical Wnt signaling involving JNK-activation and PKC. Acts redundantly with wnt11/wnt11r during pronephros induction. This chain is Protein Wnt-11b (wnt11b), found in Xenopus laevis (African clawed frog).